A 133-amino-acid polypeptide reads, in one-letter code: ATP synthase epsilon chain, chloroplastic (133 aa).

It belongs to the ATPase epsilon chain family. As to quaternary structure, F-type ATPases have 2 components, CF(1) - the catalytic core - and CF(0) - the membrane proton channel. CF(1) has five subunits: alpha(3), beta(3), gamma(1), delta(1), epsilon(1). CF(0) has three main subunits: a, b and c.

It localises to the plastid. The protein resides in the chloroplast thylakoid membrane. Its function is as follows. Produces ATP from ADP in the presence of a proton gradient across the membrane. This Citrus sinensis (Sweet orange) protein is ATP synthase epsilon chain, chloroplastic.